A 938-amino-acid chain; its full sequence is Bifunctional uridylyltransferase/uridylyl-removing enzyme (938 aa).

A uridylyltransferase region spans residues Met1–Leu379. The segment at Asp380 to Ala733 is uridylyl-removing. Residues Val495 to Leu617 enclose the HD domain. 2 consecutive ACT domains span residues Glu734–Arg813 and Val845–Ala924.

The protein belongs to the GlnD family. The cofactor is Mg(2+).

The enzyme catalyses [protein-PII]-L-tyrosine + UTP = [protein-PII]-uridylyl-L-tyrosine + diphosphate. It catalyses the reaction [protein-PII]-uridylyl-L-tyrosine + H2O = [protein-PII]-L-tyrosine + UMP + H(+). Its activity is regulated as follows. Uridylyltransferase (UTase) activity is inhibited by glutamine, while glutamine activates uridylyl-removing (UR) activity. Its function is as follows. Modifies, by uridylylation and deuridylylation, the PII regulatory proteins (GlnB and homologs), in response to the nitrogen status of the cell that GlnD senses through the glutamine level. Under low glutamine levels, catalyzes the conversion of the PII proteins and UTP to PII-UMP and PPi, while under higher glutamine levels, GlnD hydrolyzes PII-UMP to PII and UMP (deuridylylation). Thus, controls uridylylation state and activity of the PII proteins, and plays an important role in the regulation of nitrogen assimilation and metabolism. This Phenylobacterium zucineum (strain HLK1) protein is Bifunctional uridylyltransferase/uridylyl-removing enzyme.